The primary structure comprises 254 residues: Receptor expression-enhancing protein 3 (254 aa).

3 consecutive transmembrane segments (helical) span residues M1–Y21, Y35–A55, and L59–P79. Residues D162–K232 are disordered. A compositionally biased stretch (acidic residues) spans E198–E212. T200 carries the post-translational modification Phosphothreonine. A Phosphoserine modification is found at S209.

It belongs to the DP1 family.

Its subcellular location is the endoplasmic reticulum membrane. In terms of biological role, microtubule-binding protein required to ensure proper cell division and nuclear envelope reassembly by sequestering the endoplasmic reticulum away from chromosomes during mitosis. Probably acts by clearing the endoplasmic reticulum membrane from metaphase chromosomes. This Mus musculus (Mouse) protein is Receptor expression-enhancing protein 3 (Reep3).